The primary structure comprises 355 residues: Peptide chain release factor 1 (355 aa).

Glutamine 231 is subject to N5-methylglutamine. Positions 280–293 (KERKAKEQSERKDQ) are enriched in basic and acidic residues. The tract at residues 280–307 (KERKAKEQSERKDQVGTGDRSGRIRTYN) is disordered.

It belongs to the prokaryotic/mitochondrial release factor family. Post-translationally, methylated by PrmC. Methylation increases the termination efficiency of RF1.

Its subcellular location is the cytoplasm. Peptide chain release factor 1 directs the termination of translation in response to the peptide chain termination codons UAG and UAA. The chain is Peptide chain release factor 1 from Campylobacter hominis (strain ATCC BAA-381 / DSM 21671 / CCUG 45161 / LMG 19568 / NCTC 13146 / CH001A).